Consider the following 203-residue polypeptide: Small ribosomal subunit protein uS4 (203 aa).

In terms of domain architecture, S4 RNA-binding spans 93–153 (RRFDNVVFRA…QKSQNLDAVA (61 aa)).

The protein belongs to the universal ribosomal protein uS4 family. As to quaternary structure, part of the 30S ribosomal subunit. Contacts protein S5. The interaction surface between S4 and S5 is involved in control of translational fidelity.

In terms of biological role, one of the primary rRNA binding proteins, it binds directly to 16S rRNA where it nucleates assembly of the body of the 30S subunit. Functionally, with S5 and S12 plays an important role in translational accuracy. This is Small ribosomal subunit protein uS4 from Chlorobium phaeobacteroides (strain BS1).